Reading from the N-terminus, the 387-residue chain is uncharacterized protein (387 aa).

The protein localises to the mitochondrion. This is an uncharacterized protein from Paramecium tetraurelia.